The sequence spans 451 residues: MKVSSLLPSVLLLVGATRASPHPAQPPQQQPLNNIIEESNTQTNPPNKHDLEHVIDTSPLLSLHRDLVKFESISGNEADVGDFLIQYLQARDFKVEKQIVVPKGPKGQGERFNIYAYPNSTPEPRVLLSSHMDTVPPYIPYSLDLPSSNGSTTDSLNWRDNILIAGRGSVDAKASVASQILAVLEYLQLHPEAPLGLLFVVGEEVDGIGMQYFSQSELNTSPPTVHTVIFGEPTELALVSGHKGSLFFKISAKGKAAHSGYPWLGQSAVSALLPALVKLDTLADIPVEDGGIPGSEKLGKSTINIGRIDAGIASNVVPASAEASVNIRLAYHDVEKVKEIVTKAVDEATNGDENVTIEWGNKGKGHAPIDFDTDVDGFKVMTVNYATDAWYLKFHEGSGGSPEGRVHTYLYGPGSIFVAHGADEAITVRDLEDAVSGYKKLIEAAFERNKV.

Positions 1–19 (MKVSSLLPSVLLLVGATRA) are cleaved as a signal peptide. A glycan (N-linked (GlcNAc...) asparagine) is linked at Asn149. Asp171 provides a ligand contact to Zn(2+). The Proton acceptor role is filled by Glu203. Glu204 provides a ligand contact to Zn(2+). Residue Asn354 is glycosylated (N-linked (GlcNAc...) asparagine).

The protein belongs to the peptidase M20A family. Zn(2+) is required as a cofactor.

Its subcellular location is the secreted. The protein is Probable carboxypeptidase PMAA_093910 of Talaromyces marneffei (strain ATCC 18224 / CBS 334.59 / QM 7333) (Penicillium marneffei).